Consider the following 281-residue polypeptide: Bifunctional protein FolD (281 aa).

NADP(+) contacts are provided by residues 164-166, S189, and T230; that span reads GRS.

This sequence belongs to the tetrahydrofolate dehydrogenase/cyclohydrolase family. As to quaternary structure, homodimer.

It catalyses the reaction (6R)-5,10-methylene-5,6,7,8-tetrahydrofolate + NADP(+) = (6R)-5,10-methenyltetrahydrofolate + NADPH. It carries out the reaction (6R)-5,10-methenyltetrahydrofolate + H2O = (6R)-10-formyltetrahydrofolate + H(+). It functions in the pathway one-carbon metabolism; tetrahydrofolate interconversion. In terms of biological role, catalyzes the oxidation of 5,10-methylenetetrahydrofolate to 5,10-methenyltetrahydrofolate and then the hydrolysis of 5,10-methenyltetrahydrofolate to 10-formyltetrahydrofolate. In Dictyoglomus turgidum (strain DSM 6724 / Z-1310), this protein is Bifunctional protein FolD.